The following is a 65-amino-acid chain: Large ribosomal subunit protein bL35 (65 aa).

It belongs to the bacterial ribosomal protein bL35 family.

The chain is Large ribosomal subunit protein bL35 from Blochmanniella pennsylvanica (strain BPEN).